Reading from the N-terminus, the 102-residue chain is C-X-C motif chemokine 10 (102 aa).

Residues methionine 1–glycine 19 form the signal peptide. Citrulline is present on arginine 24. Intrachain disulfides connect cysteine 28/cysteine 55 and cysteine 30/cysteine 72.

This sequence belongs to the intercrine alpha (chemokine CxC) family. In terms of assembly, monomer, dimer, and tetramer. Interacts with CXCR3 (via N-terminus).

It is found in the secreted. Functionally, pro-inflammatory cytokine that is involved in a wide variety of processes such as chemotaxis, differentiation, and activation of peripheral immune cells, regulation of cell growth, apoptosis and modulation of angiostatic effects. Plays thereby an important role during viral infections by stimulating the activation and migration of immune cells to the infected sites. Mechanistically, binding of CXCL10 to the CXCR3 receptor activates G protein-mediated signaling and results in downstream activation of phospholipase C-dependent pathway, an increase in intracellular calcium production and actin reorganization. In turn, recruitment of activated Th1 lymphocytes occurs at sites of inflammation. Activation of the CXCL10/CXCR3 axis also plays an important role in neurons in response to brain injury for activating microglia, the resident macrophage population of the central nervous system, and directing them to the lesion site. This recruitment is an essential element for neuronal reorganization. The chain is C-X-C motif chemokine 10 (CXCL10) from Bos taurus (Bovine).